A 212-amino-acid polypeptide reads, in one-letter code: Phosphatidylserine decarboxylase proenzyme (212 aa).

Ser182 functions as the Schiff-base intermediate with substrate; via pyruvic acid in the catalytic mechanism. The residue at position 182 (Ser182) is a Pyruvic acid (Ser); by autocatalysis.

Belongs to the phosphatidylserine decarboxylase family. PSD-A subfamily. Heterodimer of a large membrane-associated beta subunit and a small pyruvoyl-containing alpha subunit. It depends on pyruvate as a cofactor. In terms of processing, is synthesized initially as an inactive proenzyme. Formation of the active enzyme involves a self-maturation process in which the active site pyruvoyl group is generated from an internal serine residue via an autocatalytic post-translational modification. Two non-identical subunits are generated from the proenzyme in this reaction, and the pyruvate is formed at the N-terminus of the alpha chain, which is derived from the carboxyl end of the proenzyme. The post-translation cleavage follows an unusual pathway, termed non-hydrolytic serinolysis, in which the side chain hydroxyl group of the serine supplies its oxygen atom to form the C-terminus of the beta chain, while the remainder of the serine residue undergoes an oxidative deamination to produce ammonia and the pyruvoyl prosthetic group on the alpha chain.

Its subcellular location is the cell membrane. It catalyses the reaction a 1,2-diacyl-sn-glycero-3-phospho-L-serine + H(+) = a 1,2-diacyl-sn-glycero-3-phosphoethanolamine + CO2. It participates in phospholipid metabolism; phosphatidylethanolamine biosynthesis; phosphatidylethanolamine from CDP-diacylglycerol: step 2/2. Its function is as follows. Catalyzes the formation of phosphatidylethanolamine (PtdEtn) from phosphatidylserine (PtdSer). This Paraburkholderia phytofirmans (strain DSM 17436 / LMG 22146 / PsJN) (Burkholderia phytofirmans) protein is Phosphatidylserine decarboxylase proenzyme.